The chain runs to 420 residues: UDP-N-acetylglucosamine 1-carboxyvinyltransferase (420 aa).

22–23 (KN) contributes to the phosphoenolpyruvate binding site. A UDP-N-acetyl-alpha-D-glucosamine-binding site is contributed by Arg92. Cys116 acts as the Proton donor in catalysis. Cys116 is modified (2-(S-cysteinyl)pyruvic acid O-phosphothioketal). UDP-N-acetyl-alpha-D-glucosamine-binding positions include 121 to 125 (RPVDQ), Asp304, and Ile326.

This sequence belongs to the EPSP synthase family. MurA subfamily.

It localises to the cytoplasm. The enzyme catalyses phosphoenolpyruvate + UDP-N-acetyl-alpha-D-glucosamine = UDP-N-acetyl-3-O-(1-carboxyvinyl)-alpha-D-glucosamine + phosphate. It participates in cell wall biogenesis; peptidoglycan biosynthesis. Functionally, cell wall formation. Adds enolpyruvyl to UDP-N-acetylglucosamine. This is UDP-N-acetylglucosamine 1-carboxyvinyltransferase from Paraburkholderia phytofirmans (strain DSM 17436 / LMG 22146 / PsJN) (Burkholderia phytofirmans).